A 650-amino-acid polypeptide reads, in one-letter code: 1-deoxy-D-xylulose-5-phosphate synthase 2 (650 aa).

Thiamine diphosphate-binding positions include His79 and 120-122; that span reads AHS. Asp151 lines the Mg(2+) pocket. Residues 152 to 153, Asn180, Tyr289, and Glu371 each bind thiamine diphosphate; that span reads GS. Asn180 lines the Mg(2+) pocket.

This sequence belongs to the transketolase family. DXPS subfamily. In terms of assembly, homodimer. Requires Mg(2+) as cofactor. It depends on thiamine diphosphate as a cofactor.

The enzyme catalyses D-glyceraldehyde 3-phosphate + pyruvate + H(+) = 1-deoxy-D-xylulose 5-phosphate + CO2. Its pathway is metabolic intermediate biosynthesis; 1-deoxy-D-xylulose 5-phosphate biosynthesis; 1-deoxy-D-xylulose 5-phosphate from D-glyceraldehyde 3-phosphate and pyruvate: step 1/1. Catalyzes the acyloin condensation reaction between C atoms 2 and 3 of pyruvate and glyceraldehyde 3-phosphate to yield 1-deoxy-D-xylulose-5-phosphate (DXP). This is 1-deoxy-D-xylulose-5-phosphate synthase 2 from Zymomonas mobilis subsp. mobilis (strain ATCC 31821 / ZM4 / CP4).